The chain runs to 282 residues: Nucleotide-binding protein XCV3122 (282 aa).

5–12 (GLSGSGKS) provides a ligand contact to ATP. A GTP-binding site is contributed by 57–60 (DVRS).

This sequence belongs to the RapZ-like family.

Displays ATPase and GTPase activities. The chain is Nucleotide-binding protein XCV3122 from Xanthomonas euvesicatoria pv. vesicatoria (strain 85-10) (Xanthomonas campestris pv. vesicatoria).